The chain runs to 115 residues: MTLLFKLVKIAILVFLMVIGFFIFIGSFWLNTYQTAQWADLLASSDASGIILTIFPNINSWFNATVANQPVLFKTMVHFFIPVGFGLLFGLIIAIIVDILYRLTKYAIKRSYQSN.

Transmembrane regions (helical) follow at residues 10 to 30 (IAIL…SFWL), 47 to 67 (ASGI…ATVA), and 77 to 97 (VHFF…AIIV).

It localises to the cell membrane. This is an uncharacterized protein from Mycoplasma genitalium (strain ATCC 33530 / DSM 19775 / NCTC 10195 / G37) (Mycoplasmoides genitalium).